Here is a 551-residue protein sequence, read N- to C-terminus: Protein GPR107 (551 aa).

Positions 1 to 33 (MAVPVPLGRFGSFCLRLLRLLALLELLVHPVLG) are cleaved as a signal peptide. Over 40–262 (LKDDVRHKVH…YLSAGEIPLP (223 aa)) the chain is Extracellular. Asn64 and Asn209 each carry an N-linked (GlcNAc...) asparagine glycan. Cys106 and Cys226 are oxidised to a cystine. A helical membrane pass occupies residues 263 to 283 (KLYVSMALFFFLSGTIWIHIL). Over 284-292 (RKRRNDVFK) the chain is Cytoplasmic. A helical membrane pass occupies residues 293–313 (IHWLMAALPFTKSLSLVFHAI). Residues 314–336 (DYHYISSQGFPIEGWAVVYYITH) lie on the Extracellular side of the membrane. Residues 337-357 (LLKGALLFITIALIGTGWAFI) form a helical membrane-spanning segment. Over 358-367 (KHILSDKDKK) the chain is Cytoplasmic. Residues 368–388 (IFMIVIPLQVLANVAYIIIES) form a helical membrane-spanning segment. Residues 389-401 (TEEGTTEYGLWKD) lie on the Extracellular side of the membrane. The chain crosses the membrane as a helical span at residues 402-422 (SLFLVDLLCCGAILFPVVWSI). The Cytoplasmic segment spans residues 423 to 449 (RHLQEASATDGKAAINLAKLRLFRHYY). A helical membrane pass occupies residues 450-470 (VLIVCYIYFTRIIAFLLKFAV). The Extracellular portion of the chain corresponds to 471–475 (PFQWK). The chain crosses the membrane as a helical span at residues 476 to 495 (WLYQLLDETATLVFFVLTGY). Over 496–551 (KFRPASDNPYLQLSQEDDDLEMESVVTTSGVMENMKKVKKVSNGAVEPQGSWEGTA) the chain is Cytoplasmic. A Phosphoserine modification is found at Ser537.

This sequence belongs to the LU7TM family. In terms of processing, cleaved by FURIN to yield two fragments that remain associated via a disulfide bond.

It localises to the cell membrane. Its subcellular location is the golgi apparatus. The protein localises to the trans-Golgi network membrane. Has been proposed to act as a receptor for neuronostatin, a peptide derived from the somatostatin/SST precursor. Involved in blood sugar regulation through the induction of glucagon in response to low glucose. This is Protein GPR107 (Gpr107) from Mus musculus (Mouse).